A 454-amino-acid polypeptide reads, in one-letter code: MDLMMPNDSMFLFIESREHPMHVGGLSLFEPPQGAGPEFVREFTERLVANDEFQPMFRKHPATIGGGIARVAWAYDDDIDIDYHVRRSALPSPGRVRDLLELTSRLHTSLLDRHRPLWELHVVEGLNDGRFAMYTKMHHALIDGVSAMKLAQRTLSADPDDAEVRAIWNLPPRPRTRPPSDGSSLLDALFKMAGSVVGLAPSTLKLARAALLEQQLTLPFAAPHSMFNVKVGGARRCAAQSWSLDRIKSVKQAAGVTVNDAVLAMCAGALRYYLIERNALPDRPLIAMVPVSLRSKEDADAGGNLVGSVLCNLATHVDDPAQRIQTISASMDGNKKVLSELPQLQVLALSALNMAPLTLAGVPGFLSAVPPPFNIVISNVPGPVDPLYYGTARLDGSYPLSNIPDGQALNITLVNNAGNLDFGLVGCRRSVPHLQRLLAHLESSLKDLEQAVGI.

His-139 serves as the catalytic Proton acceptor.

It belongs to the long-chain O-acyltransferase family.

The enzyme catalyses an acyl-CoA + a 1,2-diacyl-sn-glycerol = a triacyl-sn-glycerol + CoA. It catalyses the reaction a long chain fatty alcohol + a fatty acyl-CoA = a wax ester + CoA. The protein operates within glycerolipid metabolism; triacylglycerol biosynthesis. Catalyzes the terminal and only committed step in triacylglycerol synthesis by using diacylglycerol and fatty acyl CoA as substrates. Required for storage lipid synthesis. In Mycobacterium tuberculosis (strain CDC 1551 / Oshkosh), this protein is Probable diacyglycerol O-acyltransferase tgs2 (tgs2).